Here is a 149-residue protein sequence, read N- to C-terminus: Nucleoside diphosphate kinase (149 aa).

Residues lysine 9, phenylalanine 57, arginine 85, threonine 91, arginine 102, and asparagine 112 each coordinate ATP. Histidine 115 acts as the Pros-phosphohistidine intermediate in catalysis.

It belongs to the NDK family. As to quaternary structure, homotetramer. It depends on Mg(2+) as a cofactor.

Its subcellular location is the cytoplasm. It catalyses the reaction dZDP + ATP = dZTP + ADP. The catalysed reaction is a 2'-deoxyribonucleoside 5'-diphosphate + ATP = a 2'-deoxyribonucleoside 5'-triphosphate + ADP. The enzyme catalyses a ribonucleoside 5'-diphosphate + ATP = a ribonucleoside 5'-triphosphate + ADP. It functions in the pathway purine metabolism. Major role in the synthesis of nucleoside triphosphates other than ATP. The ATP gamma phosphate is transferred to the NDP beta phosphate via a ping-pong mechanism, using a phosphorylated active-site intermediate. Its function is as follows. (Microbial infection) Catalyzes the phosphorylation of dZDP to dZTP, when the bacterium is infected by a phage that produces the substrate for the synthesis of dZTP (2- amino-2'-deoxyadenosine 5'-triphosphate), which is then used by the phage as a DNA polymerase substrate. The polypeptide is Nucleoside diphosphate kinase (Synechococcus sp. (strain JA-3-3Ab) (Cyanobacteria bacterium Yellowstone A-Prime)).